The following is a 371-amino-acid chain: S-adenosylmethionine:tRNA ribosyltransferase-isomerase (371 aa).

Belongs to the QueA family. As to quaternary structure, monomer.

It localises to the cytoplasm. The catalysed reaction is 7-aminomethyl-7-carbaguanosine(34) in tRNA + S-adenosyl-L-methionine = epoxyqueuosine(34) in tRNA + adenine + L-methionine + 2 H(+). It functions in the pathway tRNA modification; tRNA-queuosine biosynthesis. Transfers and isomerizes the ribose moiety from AdoMet to the 7-aminomethyl group of 7-deazaguanine (preQ1-tRNA) to give epoxyqueuosine (oQ-tRNA). The sequence is that of S-adenosylmethionine:tRNA ribosyltransferase-isomerase from Prochlorococcus marinus (strain MIT 9313).